The primary structure comprises 3092 residues: Probable polyketide synthase 45 (3092 aa).

A Ketosynthase family 3 (KS3) domain is found at 10 to 430 (DNDVAIIGIG…GSNVCLILTE (421 aa)). Catalysis depends on for beta-ketoacyl synthase activity residues Cys-170, His-315, and His-353. An acyl/malonyl transferase region spans residues 640 to 673 (GILASISIGHSLGEVSSAVCSGMIDLETGCFIIY). The active-site For acyl/malonyl transferase activity is Ser-650. The tract at residues 967–1087 (INQLGNRNER…GKFSITKHND (121 aa)) is N-terminal hotdog fold. One can recognise a PKS/mFAS DH domain in the interval 967 to 1254 (INQLGNRNER…YTQLTPYKNQ (288 aa)). His-999 acts as the Proton acceptor; for dehydratase activity in catalysis. The interval 1103-1254 (NFVTIQKKEL…YTQLTPYKNQ (152 aa)) is C-terminal hotdog fold. The active-site Proton donor; for dehydratase activity is Asp-1165. Residues 2566–2644 (SDDLSIREEI…QLIQSVTDAM (79 aa)) enclose the Carrier domain. Position 2604 is an O-(pantetheine 4'-phosphoryl)serine (Ser-2604). The helical transmembrane segment at 2705-2725 (NTVFLTGSSGFIGIYILFYLI) threads the bilayer.

It depends on pantetheine 4'-phosphate as a cofactor.

Its subcellular location is the membrane. Probable polyketide synthase. This is Probable polyketide synthase 45 (pks45) from Dictyostelium discoideum (Social amoeba).